Consider the following 129-residue polypeptide: UPF0325 protein Spro_3794 (129 aa).

The protein belongs to the UPF0325 family.

This is UPF0325 protein Spro_3794 from Serratia proteamaculans (strain 568).